Reading from the N-terminus, the 401-residue chain is GRIP domain-containing protein C119.12 (401 aa).

Positions 7–296 (NETKLVENEN…TLLIGKLQHE (290 aa)) form a coiled coil. Residues 315-366 (NNAEKIDKQLISNLFVSFLTLPRADTKRFEILQLISSVLDWNDTQREQTGLQ) enclose the GRIP domain.

The protein resides in the golgi apparatus lumen. The sequence is that of GRIP domain-containing protein C119.12 from Schizosaccharomyces pombe (strain 972 / ATCC 24843) (Fission yeast).